A 275-amino-acid chain; its full sequence is Large ribosomal subunit protein uL2 (275 aa).

Residues 36–49 (TQSSTAGRNNNGRI) are compositionally biased toward polar residues. Disordered stretches follow at residues 36–59 (TQSSTAGRNNNGRITTRHKGGGHK) and 224–275 (AMNP…RHKR). Positions 50-59 (TTRHKGGGHK) are enriched in basic residues.

Belongs to the universal ribosomal protein uL2 family. As to quaternary structure, part of the 50S ribosomal subunit. Forms a bridge to the 30S subunit in the 70S ribosome.

Its function is as follows. One of the primary rRNA binding proteins. Required for association of the 30S and 50S subunits to form the 70S ribosome, for tRNA binding and peptide bond formation. It has been suggested to have peptidyltransferase activity; this is somewhat controversial. Makes several contacts with the 16S rRNA in the 70S ribosome. The sequence is that of Large ribosomal subunit protein uL2 from Burkholderia vietnamiensis (strain G4 / LMG 22486) (Burkholderia cepacia (strain R1808)).